Here is a 498-residue protein sequence, read N- to C-terminus: Glycerol kinase (498 aa).

Thr12 is a binding site for ADP. The ATP site is built by Thr12, Thr13, and Ser14. Thr12 is a sn-glycerol 3-phosphate binding site. Residue Arg16 participates in ADP binding. 4 residues coordinate sn-glycerol 3-phosphate: Arg82, Glu83, Tyr134, and Asp241. Positions 82, 83, 134, 241, and 242 each coordinate glycerol. Residues Thr263 and Gly310 each contribute to the ADP site. Residues Thr263, Gly310, Gln314, and Gly411 each contribute to the ATP site. ADP is bound by residues Gly411 and Asn415.

Belongs to the FGGY kinase family.

The catalysed reaction is glycerol + ATP = sn-glycerol 3-phosphate + ADP + H(+). It participates in polyol metabolism; glycerol degradation via glycerol kinase pathway; sn-glycerol 3-phosphate from glycerol: step 1/1. With respect to regulation, inhibited by fructose 1,6-bisphosphate (FBP). In terms of biological role, key enzyme in the regulation of glycerol uptake and metabolism. Catalyzes the phosphorylation of glycerol to yield sn-glycerol 3-phosphate. This chain is Glycerol kinase, found in Janthinobacterium sp. (strain Marseille) (Minibacterium massiliensis).